The chain runs to 283 residues: Phosphatidylserine decarboxylase proenzyme (283 aa).

Active-site charge relay system; for autoendoproteolytic cleavage activity residues include aspartate 88, histidine 145, and serine 248. Residue serine 248 is the Schiff-base intermediate with substrate; via pyruvic acid; for decarboxylase activity of the active site. Serine 248 carries the pyruvic acid (Ser); by autocatalysis modification.

This sequence belongs to the phosphatidylserine decarboxylase family. PSD-B subfamily. Prokaryotic type I sub-subfamily. As to quaternary structure, heterodimer of a large membrane-associated beta subunit and a small pyruvoyl-containing alpha subunit. The cofactor is pyruvate. Post-translationally, is synthesized initially as an inactive proenzyme. Formation of the active enzyme involves a self-maturation process in which the active site pyruvoyl group is generated from an internal serine residue via an autocatalytic post-translational modification. Two non-identical subunits are generated from the proenzyme in this reaction, and the pyruvate is formed at the N-terminus of the alpha chain, which is derived from the carboxyl end of the proenzyme. The autoendoproteolytic cleavage occurs by a canonical serine protease mechanism, in which the side chain hydroxyl group of the serine supplies its oxygen atom to form the C-terminus of the beta chain, while the remainder of the serine residue undergoes an oxidative deamination to produce ammonia and the pyruvoyl prosthetic group on the alpha chain. During this reaction, the Ser that is part of the protease active site of the proenzyme becomes the pyruvoyl prosthetic group, which constitutes an essential element of the active site of the mature decarboxylase.

It localises to the cell membrane. The enzyme catalyses a 1,2-diacyl-sn-glycero-3-phospho-L-serine + H(+) = a 1,2-diacyl-sn-glycero-3-phosphoethanolamine + CO2. Its pathway is phospholipid metabolism; phosphatidylethanolamine biosynthesis; phosphatidylethanolamine from CDP-diacylglycerol: step 2/2. Its function is as follows. Catalyzes the formation of phosphatidylethanolamine (PtdEtn) from phosphatidylserine (PtdSer). This Variovorax paradoxus (strain S110) protein is Phosphatidylserine decarboxylase proenzyme.